Here is a 171-residue protein sequence, read N- to C-terminus: Putative antiporter subunit mnhG2 (171 aa).

A run of 3 helical transmembrane segments spans residues 11–31, 51–71, and 72–92; these read IAAL…IGIV, VLLT…FFSV, and RLLL…HLVA. Positions 144-156 are enriched in basic and acidic residues; it reads DVQKQRQKEKQQE. Positions 144-171 are disordered; sequence DVQKQRQKEKQQEENIESLSEARRETKD.

It belongs to the CPA3 antiporters (TC 2.A.63) subunit G family. May form a heterooligomeric complex that consists of seven subunits: mnhA2, mnhB2, mnhC2, mnhD2, mnhE2, mnhF2 and mnhG2.

It is found in the cell membrane. The sequence is that of Putative antiporter subunit mnhG2 (mnhG2) from Staphylococcus haemolyticus (strain JCSC1435).